The following is a 662-amino-acid chain: ATP-dependent zinc metalloprotease YME1 homolog (662 aa).

206–213 (GPPGVGKT) provides a ligand contact to ATP. A Zn(2+)-binding site is contributed by H425. E426 is an active-site residue. Residues H429 and D503 each contribute to the Zn(2+) site.

In the N-terminal section; belongs to the AAA ATPase family. It in the C-terminal section; belongs to the peptidase M41 family. Zn(2+) is required as a cofactor.

Its function is as follows. Putative ATP-dependent protease. In Schistosoma mansoni (Blood fluke), this protein is ATP-dependent zinc metalloprotease YME1 homolog.